The primary structure comprises 117 residues: Small ribosomal subunit protein bS6 (117 aa).

The tract at residues 97 to 117 (TEEPSAILTKKDDRRGRRERN) is disordered.

It belongs to the bacterial ribosomal protein bS6 family.

In terms of biological role, binds together with bS18 to 16S ribosomal RNA. The protein is Small ribosomal subunit protein bS6 of Maricaulis maris (strain MCS10) (Caulobacter maris).